The sequence spans 907 residues: Dual serine/threonine and tyrosine protein kinase (907 aa).

The stretch at 373–409 (RKKENELYESLMNIANRKQEEMKDMIVETLNTMKEEL) forms a coiled coil. The 255-residue stretch at 630 to 884 (PKLGQELGRG…PLLGIVQPML (255 aa)) folds into the Protein kinase domain. ATP-binding positions include 636-644 (LGRGQYGVV) and lysine 659. Residue aspartate 755 is the Proton acceptor of the active site.

This sequence belongs to the protein kinase superfamily. Ser/Thr protein kinase family.

Its subcellular location is the cytoplasm. It localises to the cell membrane. The protein localises to the apical cell membrane. The protein resides in the basolateral cell membrane. It is found in the cell junction. The catalysed reaction is L-seryl-[protein] + ATP = O-phospho-L-seryl-[protein] + ADP + H(+). It catalyses the reaction L-threonyl-[protein] + ATP = O-phospho-L-threonyl-[protein] + ADP + H(+). The enzyme catalyses L-tyrosyl-[protein] + ATP = O-phospho-L-tyrosyl-[protein] + ADP + H(+). In terms of biological role, acts as a positive regulator of ERK phosphorylation downstream of fibroblast growth factor-receptor activation. Involved in the regulation of both caspase-dependent apoptosis and caspase-independent cell death. In the skin, it plays a predominant role in suppressing caspase-dependent apoptosis in response to UV stress in a range of dermal cell types. In Macaca mulatta (Rhesus macaque), this protein is Dual serine/threonine and tyrosine protein kinase.